Reading from the N-terminus, the 412-residue chain is Carboxypeptidase B1 (412 aa).

The signal sequence occupies residues 1 to 18 (MIPRIVVVLLSVLAVVTA). The propeptide at 19-75 (RRSYEGYKVYGIVPESPDEAEILYQIRQSNPDLDFWHLTKQPGDEARVLVAPKDQRS) is activation peptide. The 291-residue stretch at 118 to 408 (SYLRHNEINE…VGIKAMALKV (291 aa)) folds into the Peptidase M14 domain. Histidine 175 and glutamate 178 together coordinate Zn(2+). 175–178 (HARE) provides a ligand contact to a peptide. The N-linked (GlcNAc...) asparagine glycan is linked to asparagine 205. Residues arginine 230 and 246–247 (NR) each bind a peptide. A disulfide bridge connects residues cysteine 240 and cysteine 263. Histidine 299 is a binding site for Zn(2+). Residues 300–301 (SY) and tyrosine 351 each bind a peptide. The active-site Proton donor/acceptor is glutamate 374. Asparagine 395 carries an N-linked (GlcNAc...) asparagine glycan.

The protein belongs to the peptidase M14 family. In terms of assembly, monomer. Interacts with Dengue virus type 2 (DENV2, MY89-88549 strain) envelope protein E. Interacts with Dengue virus envelope protein E type 3, type 2, type 4 and type 1 with decreasing strength. It depends on Zn(2+) as a cofactor. In terms of tissue distribution, expressed in midgut (at protein level).

It is found in the endoplasmic reticulum. The enzyme catalyses Preferential release of a C-terminal lysine or arginine amino acid.. With respect to regulation, inhibited by S.tuberosum metallocarboxypeptidase inhibitor. Its function is as follows. Carboxypeptidase that preferentially hydrolyzes arginine and lysine residues at the C-terminus. During infection by dengue virus, may play a role in preventing viral packaging, maturation, and release from the midgut. The sequence is that of Carboxypeptidase B1 from Aedes aegypti (Yellowfever mosquito).